The sequence spans 187 residues: Large ribosomal subunit protein uL10 (187 aa).

Belongs to the universal ribosomal protein uL10 family. Part of the ribosomal stalk of the 50S ribosomal subunit. The N-terminus interacts with L11 and the large rRNA to form the base of the stalk. The C-terminus forms an elongated spine to which L12 dimers bind in a sequential fashion forming a multimeric L10(L12)X complex.

Its function is as follows. Forms part of the ribosomal stalk, playing a central role in the interaction of the ribosome with GTP-bound translation factors. In Roseiflexus castenholzii (strain DSM 13941 / HLO8), this protein is Large ribosomal subunit protein uL10.